Reading from the N-terminus, the 436-residue chain is MSTIAAVWAREILDSRGNPTVEVEVTLESGASGRAAVPSGASTGSREALEMRDQDASRYAGKGVTKAVENVQGELADTVIGMDALQQVAIDNLMIDTDGTENKSRLGANAILGVSLAVCRAASNFLGLPLYQYIGGINSKVLPVPMMNIINGGAHAPNNLDIQEFMIIPLGARTFADALRMGAETFHTLKKILAADGHMTAVGDEGGFAPNLKSHDEAFKYIIKAIEESGYRPGSEISLAIDAAASEFYKNGKYVLTGENLSLSSTEMVDYLGGFVERYPLISIEDGLAESDWPGWKTLTLNLGERIQLVGDDIFVTNPDILAEGIDQGVANSILIKLNQIGTVTETLDTIEMAKQAAYTTVVSHRSGETEDSFIADLSVAVNAGQIKTGSLCRSDRLAKYNQLLRIEEELEDMAIYYGPVMAGQWYEEEPEGDEE.

A (2R)-2-phosphoglycerate-binding site is contributed by Gln163. Glu205 (proton donor) is an active-site residue. 3 residues coordinate Mg(2+): Asp242, Glu285, and Asp312. Positions 337, 366, 367, and 388 each coordinate (2R)-2-phosphoglycerate. Lys337 (proton acceptor) is an active-site residue.

It belongs to the enolase family. Mg(2+) serves as cofactor.

The protein resides in the cytoplasm. It localises to the secreted. It is found in the cell surface. The enzyme catalyses (2R)-2-phosphoglycerate = phosphoenolpyruvate + H2O. The protein operates within carbohydrate degradation; glycolysis; pyruvate from D-glyceraldehyde 3-phosphate: step 4/5. Catalyzes the reversible conversion of 2-phosphoglycerate (2-PG) into phosphoenolpyruvate (PEP). It is essential for the degradation of carbohydrates via glycolysis. This Solidesulfovibrio magneticus (strain ATCC 700980 / DSM 13731 / RS-1) (Desulfovibrio magneticus) protein is Enolase.